The following is a 424-amino-acid chain: MNRNIAVVGLGYVGLPVAVTFGNKHKVIGFDINESRIKELKNNYDRTNEVTENKLKNTNIEYTSNAEDLKKADFIIIAVPTPIDKHNKPDLLPLLKASETVGKVITPDTIVVYESTVYPGATEEECVPVLEKYSGLVCGKDFFVGYSPERINPGDKVHTFETITKVVSGQTLEVLEIVADVYSSVVTAGVHKASSIKVAEAAKVIENTQRDVNIALMNELAIIFDKLDIDTNEVLKASGTKWNFLNFKPGLVGGHCIGVDPYYLTHKAQEVGHHPEVILAGRRINDNMAKYIASNVIKELLKQGLEVQGATVNVLGLTFKENCPDLRNTKVIHIIEELKEYGLNVTVNDVEADKNEAKKFFGLDLIDTKELKMVDVVLFAVPHKDYMENKKDYINLVKDCGIVFDIKGIINSDELNVSQRLWRL.

It belongs to the UDP-glucose/GDP-mannose dehydrogenase family.

The protein operates within capsule biogenesis; capsule polysaccharide biosynthesis. Functionally, required for the biosynthesis of type 1 capsular polysaccharide. The polypeptide is Protein CapL (capL) (Staphylococcus aureus).